A 968-amino-acid polypeptide reads, in one-letter code: Protein translocase subunit SecA (968 aa).

Residues Gln-86, 104 to 108 (GEGKT), and Asp-494 each bind ATP. Residues 835–968 (PAESAEESTD…RAAKAAKKRR (134 aa)) form a disordered region. Composition is skewed to low complexity over residues 883 to 892 (ARVATRPAAE) and 910 to 923 (SAPS…FSEG). Basic residues predominate over residues 956 to 968 (ARRRAAKAAKKRR).

It belongs to the SecA family. As to quaternary structure, monomer and homodimer. Part of the essential Sec protein translocation apparatus which comprises SecA, SecYEG and auxiliary proteins SecDF. Other proteins may also be involved.

Its subcellular location is the cell membrane. It localises to the cytoplasm. The catalysed reaction is ATP + H2O + cellular proteinSide 1 = ADP + phosphate + cellular proteinSide 2.. In terms of biological role, part of the Sec protein translocase complex. Interacts with the SecYEG preprotein conducting channel. Has a central role in coupling the hydrolysis of ATP to the transfer of proteins into and across the cell membrane, serving as an ATP-driven molecular motor driving the stepwise translocation of polypeptide chains across the membrane. The chain is Protein translocase subunit SecA from Beutenbergia cavernae (strain ATCC BAA-8 / DSM 12333 / CCUG 43141 / JCM 11478 / NBRC 16432 / NCIMB 13614 / HKI 0122).